Here is a 552-residue protein sequence, read N- to C-terminus: CTP synthase (552 aa).

The tract at residues methionine 1–leucine 271 is amidoligase domain. Serine 18 contacts CTP. Position 18 (serine 18) interacts with UTP. Residues serine 19–leucine 24 and aspartate 76 each bind ATP. Mg(2+)-binding residues include aspartate 76 and glutamate 145. CTP-binding positions include aspartate 152 to glutamate 154, lysine 192 to glutamine 197, and lysine 228. UTP is bound by residues lysine 192–glutamine 197 and lysine 228. Positions threonine 296 to glycine 546 constitute a Glutamine amidotransferase type-1 domain. Position 359 (glycine 359) interacts with L-glutamine. The Nucleophile; for glutamine hydrolysis role is filled by cysteine 386. Residues leucine 387–glutamine 390, glutamate 410, and arginine 472 contribute to the L-glutamine site. Catalysis depends on residues histidine 519 and glutamate 521.

Belongs to the CTP synthase family. In terms of assembly, homotetramer.

It carries out the reaction UTP + L-glutamine + ATP + H2O = CTP + L-glutamate + ADP + phosphate + 2 H(+). It catalyses the reaction L-glutamine + H2O = L-glutamate + NH4(+). The catalysed reaction is UTP + NH4(+) + ATP = CTP + ADP + phosphate + 2 H(+). Its pathway is pyrimidine metabolism; CTP biosynthesis via de novo pathway; CTP from UDP: step 2/2. Allosterically activated by GTP, when glutamine is the substrate; GTP has no effect on the reaction when ammonia is the substrate. The allosteric effector GTP functions by stabilizing the protein conformation that binds the tetrahedral intermediate(s) formed during glutamine hydrolysis. Inhibited by the product CTP, via allosteric rather than competitive inhibition. Catalyzes the ATP-dependent amination of UTP to CTP with either L-glutamine or ammonia as the source of nitrogen. Regulates intracellular CTP levels through interactions with the four ribonucleotide triphosphates. This chain is CTP synthase, found in Thermobifida fusca (strain YX).